A 284-amino-acid chain; its full sequence is D-tagatose-1,6-bisphosphate aldolase subunit GatY (284 aa).

Asp-82 functions as the Proton donor in the catalytic mechanism. Zn(2+)-binding residues include His-83 and His-180. A dihydroxyacetone phosphate-binding site is contributed by Gly-181. His-208 is a Zn(2+) binding site. Residues 209 to 211 (GAS) and 230 to 233 (NVAT) each bind dihydroxyacetone phosphate.

This sequence belongs to the class II fructose-bisphosphate aldolase family. TagBP aldolase GatY subfamily. In terms of assembly, forms a complex with GatZ. Zn(2+) serves as cofactor.

It catalyses the reaction D-tagatofuranose 1,6-bisphosphate = D-glyceraldehyde 3-phosphate + dihydroxyacetone phosphate. It functions in the pathway carbohydrate metabolism; D-tagatose 6-phosphate degradation; D-glyceraldehyde 3-phosphate and glycerone phosphate from D-tagatose 6-phosphate: step 2/2. Its function is as follows. Catalytic subunit of the tagatose-1,6-bisphosphate aldolase GatYZ, which catalyzes the reversible aldol condensation of dihydroxyacetone phosphate (DHAP or glycerone-phosphate) with glyceraldehyde 3-phosphate (G3P) to produce tagatose 1,6-bisphosphate (TBP). Requires GatZ subunit for full activity and stability. Is involved in the catabolism of galactitol. In Shigella dysenteriae serotype 1 (strain Sd197), this protein is D-tagatose-1,6-bisphosphate aldolase subunit GatY.